We begin with the raw amino-acid sequence, 70 residues long: MQGVQEQIEELQTKLAFQELTVEELNQEVIKLNQLIAHQQHQIQLLIGKLQAMEPSNIATQAEETPPPHY.

The protein belongs to the SlyX family.

This Shewanella sp. (strain MR-4) protein is Protein SlyX homolog.